Reading from the N-terminus, the 178-residue chain is Ribosome maturation factor RimM (178 aa).

The region spanning 95–174 (EGQHFWFNVI…IVHVKDAKDI (80 aa)) is the PRC barrel domain.

This sequence belongs to the RimM family. As to quaternary structure, binds ribosomal protein uS19.

Its subcellular location is the cytoplasm. Its function is as follows. An accessory protein needed during the final step in the assembly of 30S ribosomal subunit, possibly for assembly of the head region. Essential for efficient processing of 16S rRNA. May be needed both before and after RbfA during the maturation of 16S rRNA. It has affinity for free ribosomal 30S subunits but not for 70S ribosomes. The chain is Ribosome maturation factor RimM from Sulfurovum sp. (strain NBC37-1).